The chain runs to 622 residues: Phosphoribomutase (622 aa).

Substrate-binding positions include Thr57, Arg61, 158 to 159 (SH), and Lys168. The active-site Phosphoserine intermediate is the Ser158. Ser158 is a Mg(2+) binding site. Residue Ser158 is modified to Phosphoserine. Mg(2+)-binding residues include Asp325, Asp327, and Asp329. Substrate is bound by residues 329–330 (DR), Thr404, 428–430 (EEA), and Lys442.

The protein belongs to the phosphohexose mutase family. Mg(2+) is required as a cofactor.

Its subcellular location is the cytoplasm. It is found in the nucleus. It carries out the reaction alpha-D-ribose 1-phosphate = D-ribose 5-phosphate. Functionally, major phosphoribomutase that converts ribose 1-phosphate to ribose 5-phosphate. Involved in ribose salvage via the pentose phosphate pathway. This Saccharomyces cerevisiae (strain ATCC 204508 / S288c) (Baker's yeast) protein is Phosphoribomutase.